A 362-amino-acid chain; its full sequence is Holliday junction branch migration complex subunit RuvB (362 aa).

The tract at residues 1–183 is large ATPase domain (RuvB-L); the sequence is MADSSLVGGG…FGFTGHLEFY (183 aa). Residues Leu-22, Arg-23, Gly-64, Lys-67, Thr-68, Thr-69, 130 to 132, Arg-173, Tyr-183, and Arg-220 each bind ATP; that span reads EDF. Thr-68 contacts Mg(2+). Residues 184–254 are small ATPAse domain (RuvB-S); that stretch reads SVEELELVLR…TASAALDMYE (71 aa). Positions 257-362 are head domain (RuvB-H); sequence KRGLDRLDRS…PVAEWLPNGQ (106 aa). DNA-binding residues include Arg-312 and Arg-317.

The protein belongs to the RuvB family. As to quaternary structure, homohexamer. Forms an RuvA(8)-RuvB(12)-Holliday junction (HJ) complex. HJ DNA is sandwiched between 2 RuvA tetramers; dsDNA enters through RuvA and exits via RuvB. An RuvB hexamer assembles on each DNA strand where it exits the tetramer. Each RuvB hexamer is contacted by two RuvA subunits (via domain III) on 2 adjacent RuvB subunits; this complex drives branch migration. In the full resolvosome a probable DNA-RuvA(4)-RuvB(12)-RuvC(2) complex forms which resolves the HJ.

It localises to the cytoplasm. The enzyme catalyses ATP + H2O = ADP + phosphate + H(+). The RuvA-RuvB-RuvC complex processes Holliday junction (HJ) DNA during genetic recombination and DNA repair, while the RuvA-RuvB complex plays an important role in the rescue of blocked DNA replication forks via replication fork reversal (RFR). RuvA specifically binds to HJ cruciform DNA, conferring on it an open structure. The RuvB hexamer acts as an ATP-dependent pump, pulling dsDNA into and through the RuvAB complex. RuvB forms 2 homohexamers on either side of HJ DNA bound by 1 or 2 RuvA tetramers; 4 subunits per hexamer contact DNA at a time. Coordinated motions by a converter formed by DNA-disengaged RuvB subunits stimulates ATP hydrolysis and nucleotide exchange. Immobilization of the converter enables RuvB to convert the ATP-contained energy into a lever motion, pulling 2 nucleotides of DNA out of the RuvA tetramer per ATP hydrolyzed, thus driving DNA branch migration. The RuvB motors rotate together with the DNA substrate, which together with the progressing nucleotide cycle form the mechanistic basis for DNA recombination by continuous HJ branch migration. Branch migration allows RuvC to scan DNA until it finds its consensus sequence, where it cleaves and resolves cruciform DNA. The chain is Holliday junction branch migration complex subunit RuvB from Arthrobacter sp. (strain FB24).